The sequence spans 420 residues: Calsequestrin-1 (420 aa).

A signal peptide spans 1–22 (MKGPWLVLAALCLSLANLGPRG). Asn-338 carries an N-linked (GlcNAc...) asparagine glycan. Residues 369–420 (LEGEVNTEDDDDDDDDDDDDDDDDDDDDDDDDDDDDDDDDDDDDDDDDDDDD) are disordered.

Belongs to the calsequestrin family. In terms of assembly, monomer; increases in response to a depletion of intracellular calcium. Homodimer. Homotetramer and homopolymer. Can form linear homooligomers. Ca(2+) ions promote oligomerization. In terms of tissue distribution, detected in skeletal muscle (at protein level). Detected in skeletal muscle.

The protein resides in the endoplasmic reticulum. Its subcellular location is the sarcoplasmic reticulum. It localises to the sarcoplasmic reticulum lumen. The protein localises to the sarcoplasmic reticulum membrane. It is found in the mitochondrion matrix. In terms of biological role, calsequestrin is a high-capacity, moderate affinity, calcium-binding protein and thus acts as an internal calcium store in muscle. Calcium ions are bound by clusters of acidic residues at the protein surface, often at the interface between subunits. Can bind around 80 Ca(2+) ions. Regulates the release of lumenal Ca(2+) via the calcium release channel RYR1; this plays an important role in triggering muscle contraction. Negatively regulates store-operated Ca(2+) entry (SOCE) activity. The chain is Calsequestrin-1 from Pelophylax lessonae (Pool frog).